The following is a 452-amino-acid chain: Phosphoglucosamine mutase (452 aa).

Ser-108 serves as the catalytic Phosphoserine intermediate. Mg(2+)-binding residues include Ser-108, Asp-247, Asp-249, and Asp-251. At Ser-108 the chain carries Phosphoserine.

Belongs to the phosphohexose mutase family. Requires Mg(2+) as cofactor. Post-translationally, activated by phosphorylation.

It catalyses the reaction alpha-D-glucosamine 1-phosphate = D-glucosamine 6-phosphate. In terms of biological role, catalyzes the conversion of glucosamine-6-phosphate to glucosamine-1-phosphate. The chain is Phosphoglucosamine mutase from Paraburkholderia phymatum (strain DSM 17167 / CIP 108236 / LMG 21445 / STM815) (Burkholderia phymatum).